A 531-amino-acid polypeptide reads, in one-letter code: uncharacterized protein (531 aa).

A signal peptide spans 1 to 28 (MNTKGIIAKLTAGALIANLLICPANTLA). SLH domains are found at residues 29 to 85 (EKKT…QINK), 86 to 149 (QAKP…IGDL), and 150 to 210 (PTQF…SKRM). The MurNAc-LAA domain occupies 335 to 517 (IIIDPGHGGI…AAEAIYAGIL (183 aa)).

This sequence in the C-terminal section; belongs to the N-acetylmuramoyl-L-alanine amidase 3 family.

It localises to the secreted. The protein resides in the cell wall. The protein localises to the S-layer. This is an uncharacterized protein from Bacillus anthracis.